The primary structure comprises 197 residues: Nucleoid occlusion factor SlmA (197 aa).

The region spanning 6-66 is the HTH tetR-type domain; the sequence is NDRRTQILQA…GLIEFIEESL (61 aa). The H-T-H motif DNA-binding region spans 29-48; it reads TTAALAKQVGVSEAALYRHF.

It belongs to the nucleoid occlusion factor SlmA family. In terms of assembly, homodimer. Interacts with FtsZ.

The protein localises to the cytoplasm. It localises to the nucleoid. Functionally, required for nucleoid occlusion (NO) phenomenon, which prevents Z-ring formation and cell division over the nucleoid. Acts as a DNA-associated cell division inhibitor that binds simultaneously chromosomal DNA and FtsZ, and disrupts the assembly of FtsZ polymers. SlmA-DNA-binding sequences (SBS) are dispersed on non-Ter regions of the chromosome, preventing FtsZ polymerization at these regions. This Marinomonas sp. (strain MWYL1) protein is Nucleoid occlusion factor SlmA.